The primary structure comprises 368 residues: tRNA-specific 2-thiouridylase MnmA (368 aa).

Residues 12–19 (GMSGGVDS) and Met-38 each bind ATP. The tract at residues 98-100 (NPD) is interaction with target base in tRNA. Catalysis depends on Cys-103, which acts as the Nucleophile. A disulfide bond links Cys-103 and Cys-200. Gly-128 provides a ligand contact to ATP. The interval 150-152 (KDQ) is interaction with tRNA. Cys-200 (cysteine persulfide intermediate) is an active-site residue. The segment at 311-312 (RY) is interaction with tRNA.

The protein belongs to the MnmA/TRMU family.

The protein resides in the cytoplasm. The enzyme catalyses S-sulfanyl-L-cysteinyl-[protein] + uridine(34) in tRNA + AH2 + ATP = 2-thiouridine(34) in tRNA + L-cysteinyl-[protein] + A + AMP + diphosphate + H(+). Catalyzes the 2-thiolation of uridine at the wobble position (U34) of tRNA, leading to the formation of s(2)U34. This is tRNA-specific 2-thiouridylase MnmA from Aeromonas salmonicida (strain A449).